The primary structure comprises 235 residues: Ubiquinone biosynthesis O-methyltransferase (235 aa).

S-adenosyl-L-methionine-binding residues include Arg39, Gly59, Asp80, and Met124.

The protein belongs to the methyltransferase superfamily. UbiG/COQ3 family.

The catalysed reaction is a 3-demethylubiquinol + S-adenosyl-L-methionine = a ubiquinol + S-adenosyl-L-homocysteine + H(+). It catalyses the reaction a 3-(all-trans-polyprenyl)benzene-1,2-diol + S-adenosyl-L-methionine = a 2-methoxy-6-(all-trans-polyprenyl)phenol + S-adenosyl-L-homocysteine + H(+). The protein operates within cofactor biosynthesis; ubiquinone biosynthesis. In terms of biological role, O-methyltransferase that catalyzes the 2 O-methylation steps in the ubiquinone biosynthetic pathway. The polypeptide is Ubiquinone biosynthesis O-methyltransferase (Vibrio vulnificus (strain CMCP6)).